Here is a 535-residue protein sequence, read N- to C-terminus: Estrogen receptor (535 aa).

The tract at residues 1–21 is disordered; sequence SRMLTDPPRIGSMQSLGSSPT. The tract at residues 1–104 is modulating; it reads SRMLTDPPRI…VFEMANETRY (104 aa). Residues 12-21 are compositionally biased toward polar residues; that stretch reads SMQSLGSSPT. 2 NR C4-type zinc fingers span residues 105 to 125 and 141 to 165; these read CAVC…CEGC and CPAT…LRKC. Residues 105–170 constitute a DNA-binding region (nuclear receptor); it reads CAVCSDFASG…RLRKCYEVGM (66 aa). Residues 171–236 form a hinge region; it reads VKGGLRKDRG…GGWCGPRITM (66 aa). Residues 187-229 form a disordered region; sequence DKRYCGPAGDREKPYGDLEHRTAPPQDGGRNSSSSSLSGGGGW. A compositionally biased stretch (basic and acidic residues) spans 195–208; that stretch reads GDREKPYGDLEHRT. Residues 214–223 are compositionally biased toward low complexity; that stretch reads GGRNSSSSSL. The 237-residue stretch at 237-473 folds into the NR LBD domain; it reads PPEQVLFLLQ…DLLLEMLDGH (237 aa). The segment at 478 to 535 is disordered; the sequence is PGKVAQAGEQTEGPSTTTTTSTGSSIGPMRGSQDTHIRSPGSGVLQYGSPSSDQMPIP. The segment covering 492–502 has biased composition (low complexity); it reads STTTTTSTGSS. Residues 525-535 are compositionally biased toward polar residues; sequence GSPSSDQMPIP.

The protein belongs to the nuclear hormone receptor family. NR3 subfamily. In terms of assembly, binds DNA as a homodimer. Can form a heterodimer with ER-beta. Highest expression in brain and liver.

The protein localises to the nucleus. Functionally, the steroid hormones and their receptors are involved in the regulation of eukaryotic gene expression and affect cellular proliferation and differentiation in target tissues. The protein is Estrogen receptor (esr1) of Salmo salar (Atlantic salmon).